A 1305-amino-acid polypeptide reads, in one-letter code: Contactin-associated protein-like 5 (1305 aa).

The N-terminal stretch at 1–22 (MDSPALGAVALLLAGFWHLGLT) is a signal peptide. The F5/8 type C domain maps to 23 to 174 (ATNYNCDGAL…IGLRVEVFGC (152 aa)). The Extracellular portion of the chain corresponds to 23–1236 (ATNYNCDGAL…PLTNAVRSDS (1214 aa)). 2 Laminin G-like domains span residues 180–360 (IADF…TFSC) and 367–544 (PITF…IDLC). 5 disulfide bridges follow: cysteine 329/cysteine 360, cysteine 512/cysteine 544, cysteine 550/cysteine 561, cysteine 555/cysteine 570, and cysteine 572/cysteine 582. Positions 546-583 (IKDRCLPNYCEHGGKCSQSWTTFYCDCNDTSYMGATCH) constitute an EGF-like 1 domain. The Fibrinogen C-terminal domain occupies 584 to 790 (NSIYEQSCEA…LHCYGDRQFW (207 aa)). Positions 791 to 956 (NAASFNTEAS…KMTPGVKPGC (166 aa)) constitute a Laminin G-like 3 domain. 5 disulfides stabilise this stretch: cysteine 929-cysteine 956, cysteine 960-cysteine 973, cysteine 967-cysteine 982, cysteine 984-cysteine 994, and cysteine 1163-cysteine 1198. In terms of domain architecture, EGF-like 2 spans 957–995 (PGHCSSYGNLCHNGGKCVEKYNGYSCDCTSSAYEGPFCK). Residues 1017-1198 (PVTKNASTSS…VKGSLTESSC (182 aa)) form the Laminin G-like 4 domain. The chain crosses the membrane as a helical span at residues 1237 to 1257 (AVIGGVIAVVIFIIFCIIAIM). The Cytoplasmic segment spans residues 1258-1305 (SRFLYQHKQAHRSSQTKEKEYPENLESSFKADIDLQNTVSECKREYFI).

The protein belongs to the neurexin family. In terms of tissue distribution, expressed in brain.

It localises to the membrane. May play a role in the correct development and proper functioning of the peripheral and central nervous system and be involved in cell adhesion and intercellular communication. This is Contactin-associated protein-like 5 (CNTNAP5) from Gallus gallus (Chicken).